The chain runs to 278 residues: Large ribosomal subunit protein uL2 (278 aa).

The disordered stretch occupies residues 201–278; that stretch reads HGNINDGKAG…IMRSRHQRKK (78 aa). Basic residues predominate over residues 210–221; sequence GRSRWRGKRPHV.

Belongs to the universal ribosomal protein uL2 family. In terms of assembly, part of the 50S ribosomal subunit. Forms a bridge to the 30S subunit in the 70S ribosome.

Functionally, one of the primary rRNA binding proteins. Required for association of the 30S and 50S subunits to form the 70S ribosome, for tRNA binding and peptide bond formation. It has been suggested to have peptidyltransferase activity; this is somewhat controversial. Makes several contacts with the 16S rRNA in the 70S ribosome. The protein is Large ribosomal subunit protein uL2 of Agrobacterium fabrum (strain C58 / ATCC 33970) (Agrobacterium tumefaciens (strain C58)).